Consider the following 458-residue polypeptide: Argininosuccinate lyase (458 aa).

It belongs to the lyase 1 family. Argininosuccinate lyase subfamily.

It is found in the cytoplasm. It catalyses the reaction 2-(N(omega)-L-arginino)succinate = fumarate + L-arginine. The protein operates within amino-acid biosynthesis; L-arginine biosynthesis; L-arginine from L-ornithine and carbamoyl phosphate: step 3/3. In Neisseria meningitidis serogroup C (strain 053442), this protein is Argininosuccinate lyase.